The following is a 588-amino-acid chain: MPQLGGGGGGGGGGSGGGGGSSAGAAGGGDDLGANDELIPFQDEGGEEQEPSSDSASAQRDLDEVKSSLVNESENQSSSSDSEAERRPQPVRDTFQKPRDYFAEVRRPQDSAFFKGPPYPGYPFLMIPDLSSPYLSNGPLSPGGARTYLQMKWPLLDVPSSATVKDTRSPSPAHLSNKVPVVQHPHHMHPLTPLITYSNDHFSPGSPPTHLSPEIDPKTGIPRPPHPSELSPYYPLSPGAVGQIPHPLGWLVPQQGQPMYSLPPGGFRHPYPALAMNASMSSLVSSRFSPHMVAPAHPGLPTSGIPHPAIVSPIVKQEPAPPSLSPAVSVKSPVTVKKEEEKKPHVKKPLNAFMLYMKEMRAKVVAECTLKESAAINQILGRKWHNLSREEQAKYYELARKERQLHSQLYPTWSARDNYGKKKKRKREKQLSQTQSQQQVQEAEGALASKSKKPCVQYLPPEKPCDSPASSHGSMLDSPATPSAALASPAAPAATHSEQAQPLSLTTKPETRAQLALHSAAFLSAKAAASSSGQMGSQPPLLSRPLPLGSMPTALLASPPSFPATLHAHQALPVLQAQPLSLVTKSAH.

The span at 1–31 (MPQLGGGGGGGGGGSGGGGGSSAGAAGGGDD) shows a compositional bias: gly residues. The CTNNB1-binding stretch occupies residues 1–74 (MPQLGGGGGG…VKSSLVNESE (74 aa)). Disordered stretches follow at residues 1–101 (MPQL…PRDY), 203–234 (SPGS…SPYY), and 409–506 (LYPT…LSLT). Positions 67-81 (SSLVNESENQSSSSD) are enriched in low complexity. Positions 83–101 (EAERRPQPVRDTFQKPRDY) are enriched in basic and acidic residues. The segment at residues 346–414 (VKKPLNAFML…LHSQLYPTWS (69 aa)) is a DNA-binding region (HMG box). The short motif at 421 to 427 (KKKKRKR) is the Nuclear localization signal element. Composition is skewed to low complexity over residues 431–441 (LSQTQSQQQVQ) and 478–497 (SPAT…ATHS).

Belongs to the TCF/LEF family. Binds the armadillo repeat of CTNNB1 and forms a stable complex. Interacts with DAZAP2. In terms of tissue distribution, detected in hair follicles and skin keratinocytes, and at lower levels in stomach epithelium.

The protein localises to the nucleus. In terms of biological role, participates in the Wnt signaling pathway. Binds to DNA and acts as a repressor in the absence of CTNNB1, and as an activator in its presence. Necessary for the terminal differentiation of epidermal cells, the formation of keratohyalin granules and the development of the barrier function of the epidermis. Down-regulates NQO1, leading to increased mitomycin c resistance. The chain is Transcription factor 7-like 1 (TCF7L1) from Homo sapiens (Human).